The following is a 610-amino-acid chain: DNA mismatch repair protein MutL (610 aa).

This sequence belongs to the DNA mismatch repair MutL/HexB family.

This protein is involved in the repair of mismatches in DNA. It is required for dam-dependent methyl-directed DNA mismatch repair. May act as a 'molecular matchmaker', a protein that promotes the formation of a stable complex between two or more DNA-binding proteins in an ATP-dependent manner without itself being part of a final effector complex. This Rickettsia rickettsii (strain Sheila Smith) protein is DNA mismatch repair protein MutL.